Here is a 548-residue protein sequence, read N- to C-terminus: Serine/threonine-protein phosphatase 2A 56 kDa regulatory subunit delta 1 isoform (548 aa).

A compositionally biased stretch (basic residues) spans 1 to 10 (MKGIKSKMLS). Residues 1–75 (MKGIKSKMLS…KKVPIDTTPT (75 aa)) are disordered. Over residues 27-39 (KKSNSHDSSKAPK) the composition is skewed to basic and acidic residues. Position 96 is a phosphotyrosine (tyrosine 96). A phosphoserine mark is found at serine 99, serine 109, and serine 542.

This sequence belongs to the phosphatase 2A regulatory subunit B family. As to quaternary structure, PP2A consists of a common heterodimeric core enzyme, composed of a 36 kDa catalytic subunit (subunit C) and a 65 kDa constant regulatory subunit (PR65 or subunit A), that associates with a variety of regulatory subunits. Proteins that associate with the core dimer include three families of regulatory subunits B (the R2/B/PR55/B55, R3/B''/PR72/PR130/PR59 and R5/B'/B56 families), the 48 kDa variable regulatory subunit, viral proteins, and cell signaling molecules.

It localises to the cytoplasm. The protein localises to the nucleus. Functionally, the B regulatory subunit might modulate substrate selectivity and catalytic activity, and might also direct the localization of the catalytic enzyme to a particular subcellular compartment. Has a role in cell shape control and septum formation. The polypeptide is Serine/threonine-protein phosphatase 2A 56 kDa regulatory subunit delta 1 isoform (par1) (Schizosaccharomyces pombe (strain 972 / ATCC 24843) (Fission yeast)).